Here is a 341-residue protein sequence, read N- to C-terminus: Methionine import ATP-binding protein MetN 2 (341 aa).

An ABC transporter domain is found at 2–241; sequence IELKEVVKEY…PQHAVTKRFV (240 aa). 38-45 is an ATP binding site; it reads GFSGAGKS.

This sequence belongs to the ABC transporter superfamily. Methionine importer (TC 3.A.1.24) family. The complex is composed of two ATP-binding proteins (MetN), two transmembrane proteins (MetI) and a solute-binding protein (MetQ).

It localises to the cell membrane. It carries out the reaction L-methionine(out) + ATP + H2O = L-methionine(in) + ADP + phosphate + H(+). The enzyme catalyses D-methionine(out) + ATP + H2O = D-methionine(in) + ADP + phosphate + H(+). Functionally, part of the ABC transporter complex MetNIQ involved in methionine import. Responsible for energy coupling to the transport system. This chain is Methionine import ATP-binding protein MetN 2, found in Staphylococcus aureus (strain MRSA252).